Reading from the N-terminus, the 290-residue chain is Pyridoxal kinase PdxY (290 aa).

Serine 14 is a binding site for substrate. ATP is bound by residues aspartate 116 and glutamate 153. Residue aspartate 226 coordinates substrate.

The protein belongs to the pyridoxine kinase family. PdxY subfamily. As to quaternary structure, homodimer. Requires Mg(2+) as cofactor.

It catalyses the reaction pyridoxal + ATP = pyridoxal 5'-phosphate + ADP + H(+). Its pathway is cofactor metabolism; pyridoxal 5'-phosphate salvage; pyridoxal 5'-phosphate from pyridoxal: step 1/1. In terms of biological role, pyridoxal kinase involved in the salvage pathway of pyridoxal 5'-phosphate (PLP). Catalyzes the phosphorylation of pyridoxal to PLP. The protein is Pyridoxal kinase PdxY of Rubrobacter xylanophilus (strain DSM 9941 / JCM 11954 / NBRC 16129 / PRD-1).